A 107-amino-acid polypeptide reads, in one-letter code: Large ribosomal subunit protein uL24 (107 aa).

The protein belongs to the universal ribosomal protein uL24 family. In terms of assembly, part of the 50S ribosomal subunit.

Its function is as follows. One of two assembly initiator proteins, it binds directly to the 5'-end of the 23S rRNA, where it nucleates assembly of the 50S subunit. One of the proteins that surrounds the polypeptide exit tunnel on the outside of the subunit. This is Large ribosomal subunit protein uL24 from Streptomyces coelicolor (strain ATCC BAA-471 / A3(2) / M145).